A 119-amino-acid polypeptide reads, in one-letter code: uncharacterized protein (119 aa).

Residues Met1 to Lys29 adopt a coiled-coil conformation.

This is an uncharacterized protein from Acidianus sp. F28 (AFV-2).